A 339-amino-acid chain; its full sequence is Ferrochelatase (339 aa).

Positions 202 and 283 each coordinate Fe cation.

Belongs to the ferrochelatase family.

It is found in the cytoplasm. The enzyme catalyses heme b + 2 H(+) = protoporphyrin IX + Fe(2+). It functions in the pathway porphyrin-containing compound metabolism; protoheme biosynthesis; protoheme from protoporphyrin-IX: step 1/1. Its function is as follows. Catalyzes the ferrous insertion into protoporphyrin IX. The polypeptide is Ferrochelatase (Psychrobacter sp. (strain PRwf-1)).